The sequence spans 614 residues: Vitamin B12 transporter BtuB (614 aa).

The signal sequence occupies residues methionine 1 to alanine 20. The TonB box motif lies at aspartate 26–asparagine 33. Positions proline 38–threonine 152 constitute a TBDR plug domain. Residues serine 85, asparagine 92, and valine 110–serine 111 each bind cyanocob(III)alamin. The TBDR beta-barrel domain maps to asparagine 155–phenylalanine 614. 3 consecutive transmembrane segments (beta stranded) span residues threonine 158–glycine 165, tyrosine 169–glutamine 178, and threonine 184–threonine 195. Residues aspartate 199, glutamine 211, aspartate 213, and aspartate 215 each coordinate Ca(2+). Transmembrane regions (beta stranded) follow at residues phenylalanine 217 to glutamate 227 and aspartate 232 to aspartate 248. Tyrosine 249 and aspartate 250 together coordinate Ca(2+). Alanine 251 provides a ligand contact to cyanocob(III)alamin. Aspartate 261 lines the Ca(2+) pocket. The next 14 beta stranded transmembrane spans lie at arginine 263–asparagine 277, glutamate 279–asparagine 296, threonine 309–valine 325, histidine 328–tryptophan 337, tyrosine 353–glycine 369, phenylalanine 371–aspartate 381, phenylalanine 385–isoleucine 400, tyrosine 403–asparagine 417, lysine 434–glutamate 443, valine 449–asparagine 458, tyrosine 473–phenylalanine 490, proline 494–alanine 509, arginine 517–tryptophan 529, and aspartate 535–aspartate 550. A cyanocob(III)alamin-binding site is contributed by threonine 309. Residue arginine 517 coordinates cyanocob(III)alamin. Tyrosine 551 lines the cyanocob(III)alamin pocket. 3 beta stranded membrane-spanning segments follow: residues threonine 558–alanine 572, isoleucine 585–valine 596, and alanine 602–phenylalanine 614. Positions tyrosine 597–phenylalanine 614 match the TonB C-terminal box motif.

Belongs to the TonB-dependent receptor family. BtuB (TC 1.B.14.3.1) subfamily.

It localises to the cell outer membrane. In terms of biological role, involved in the active translocation of vitamin B12 (cyanocobalamin) across the outer membrane to the periplasmic space. It derives its energy for transport by interacting with the trans-periplasmic membrane protein TonB. This is Vitamin B12 transporter BtuB from Salmonella typhimurium (strain LT2 / SGSC1412 / ATCC 700720).